The following is a 480-amino-acid chain: MARAPPPLSSLPPPPRRPTVVLLLGLALAFCLAVLSIQSSFFTAPRLASRLDLDSDEVRALSGFQSRVQQCVARRGLGLTADIIDHCKLVLRFPKGTNSTWYNTQFKYFEPLEYNYDVCETILLWEQYRNMTTVLTREYLDVRPDGWLDYAAKRIAQLGADKCYNRTLCEELLSVLLPAKPPFHPRQFATCAVVGNSGDLLKTEFGQEIDAHDAVFRDNEAPVNKKYAKYVGLKRDFRLVVRGAARNMAPILKGSSDEVLIIKSLTHKEINAVIKELPNPVYLFQGIVLRRGAKGTGMKSIELALSMCDIIDMYGFTVDPNYTEWTRYFSPPRKGHNPLQGRAYYQLLECLGVIRIHSPMRAKRVEDWSDIPSREEIRTAHAAAFRLKRHETGQSDQMGPFSNCKVWGTVDPDYGPVSGTPDMSETRKSSNYKKWEVLPFDSLRMEAQEHHVQMGGVSLYKMDGNKLDDLVCVRHERSSS.

The Cytoplasmic segment spans residues 1-17; it reads MARAPPPLSSLPPPPRR. A signal-anchor for type II membrane protein transmembrane segment spans residues 18 to 38; it reads PTVVLLLGLALAFCLAVLSIQ. The Lumenal segment spans residues 39–480; the sequence is SSFFTAPRLA…VCVRHERSSS (442 aa). Residues Asn-98, Asn-130, Asn-165, and Asn-321 are each glycosylated (N-linked (GlcNAc...) asparagine).

Belongs to the glycosyltransferase 29 family.

It localises to the golgi apparatus membrane. Functionally, may possess sialyltransferase-like activity in vitro. The sequence is that of Sialyltransferase-like protein 5 from Oryza sativa subsp. japonica (Rice).